The sequence spans 407 residues: Serine/threonine transporter SstT (407 aa).

Helical transmembrane passes span 12 to 32 (GNLI…GISS), 42 to 62 (LGIL…FILI), 81 to 101 (IIIL…LANF), 141 to 161 (ALSS…GIAL), 179 to 199 (VLKI…GLVA), 218 to 238 (ILLV…IVFF), 245 to 267 (FPLI…SSAA), 288 to 308 (ISIP…IAIL), and 330 to 350 (IIAT…LLLI).

Belongs to the dicarboxylate/amino acid:cation symporter (DAACS) (TC 2.A.23) family.

Its subcellular location is the cell inner membrane. The catalysed reaction is L-serine(in) + Na(+)(in) = L-serine(out) + Na(+)(out). It catalyses the reaction L-threonine(in) + Na(+)(in) = L-threonine(out) + Na(+)(out). Involved in the import of serine and threonine into the cell, with the concomitant import of sodium (symport system). The protein is Serine/threonine transporter SstT of Campylobacter jejuni subsp. jejuni serotype O:23/36 (strain 81-176).